Reading from the N-terminus, the 453-residue chain is Tryptophan biosynthesis protein TrpCF (453 aa).

The indole-3-glycerol phosphate synthase stretch occupies residues 1 to 257 (MMQTVLAKIV…AAVRRVLLGE (257 aa)). Positions 258–453 (NKVCGLTRGQ…ASVFQTLRAY (196 aa)) are N-(5'-phosphoribosyl)anthranilate isomerase.

In the N-terminal section; belongs to the TrpC family. It in the C-terminal section; belongs to the TrpF family. In terms of assembly, monomer.

It carries out the reaction N-(5-phospho-beta-D-ribosyl)anthranilate = 1-(2-carboxyphenylamino)-1-deoxy-D-ribulose 5-phosphate. It catalyses the reaction 1-(2-carboxyphenylamino)-1-deoxy-D-ribulose 5-phosphate + H(+) = (1S,2R)-1-C-(indol-3-yl)glycerol 3-phosphate + CO2 + H2O. The protein operates within amino-acid biosynthesis; L-tryptophan biosynthesis; L-tryptophan from chorismate: step 3/5. Its pathway is amino-acid biosynthesis; L-tryptophan biosynthesis; L-tryptophan from chorismate: step 4/5. Functionally, bifunctional enzyme that catalyzes two sequential steps of tryptophan biosynthetic pathway. The first reaction is catalyzed by the isomerase, coded by the TrpF domain; the second reaction is catalyzed by the synthase, coded by the TrpC domain. The sequence is that of Tryptophan biosynthesis protein TrpCF (trpC) from Escherichia coli O157:H7.